A 435-amino-acid chain; its full sequence is Centrosomal protein of 55 kDa (435 aa).

Disordered stretches follow at residues 1-63, 213-239, and 268-287; these read MAAK…TDKA, HKEA…KVSR, and ERRR…ALLQ. 2 coiled-coil regions span residues 18 to 140 and 185 to 373; these read SSSS…KNKY and EAYV…RESR. Basic and acidic residues-rich tracts occupy residues 26-49 and 213-222; these read AELE…DMKR and HKEAKSDDQS.

It localises to the cytoplasm. It is found in the cytoskeleton. The protein localises to the microtubule organizing center. Its subcellular location is the centrosome. The protein resides in the centriole. It localises to the cleavage furrow. It is found in the midbody. The protein localises to the midbody ring. Its function is as follows. Plays a role in mitotic exit and cytokinesis. Recruits PDCD6IP and TSG101 to midbody during cytokinesis. Required for successful completion of cytokinesis. Not required for microtubule nucleation. Plays a role in the development of the brain and kidney. This chain is Centrosomal protein of 55 kDa, found in Danio rerio (Zebrafish).